The primary structure comprises 431 residues: Enolase (431 aa).

A (2R)-2-phosphoglycerate-binding site is contributed by Q167. Catalysis depends on E209, which acts as the Proton donor. 3 residues coordinate Mg(2+): D246, E290, and D317. (2R)-2-phosphoglycerate contacts are provided by K342, R371, S372, and K393. The Proton acceptor role is filled by K342.

The protein belongs to the enolase family. In terms of assembly, component of the RNA degradosome, a multiprotein complex involved in RNA processing and mRNA degradation. It depends on Mg(2+) as a cofactor.

It is found in the cytoplasm. It localises to the secreted. The protein localises to the cell surface. It carries out the reaction (2R)-2-phosphoglycerate = phosphoenolpyruvate + H2O. The protein operates within carbohydrate degradation; glycolysis; pyruvate from D-glyceraldehyde 3-phosphate: step 4/5. Its function is as follows. Catalyzes the reversible conversion of 2-phosphoglycerate (2-PG) into phosphoenolpyruvate (PEP). It is essential for the degradation of carbohydrates via glycolysis. The sequence is that of Enolase from Yersinia pseudotuberculosis serotype O:1b (strain IP 31758).